The following is a 154-amino-acid chain: uncharacterized protein (154 aa).

Residue 12–19 (GSSDVGKT) participates in GTP binding. Residues 17–112 (GKTTLMENLI…KIPYGIFINK (96 aa)) form the G domain.

The protein to M.thermoautotrophicum MTH765.

This is an uncharacterized protein from Methanocaldococcus jannaschii (strain ATCC 43067 / DSM 2661 / JAL-1 / JCM 10045 / NBRC 100440) (Methanococcus jannaschii).